A 223-amino-acid chain; its full sequence is Cytidylate kinase (223 aa).

Residue 12–20 (GPSGVGKGT) coordinates ATP.

This sequence belongs to the cytidylate kinase family. Type 1 subfamily.

It localises to the cytoplasm. It carries out the reaction CMP + ATP = CDP + ADP. The enzyme catalyses dCMP + ATP = dCDP + ADP. The sequence is that of Cytidylate kinase from Xylella fastidiosa (strain M12).